A 311-amino-acid chain; its full sequence is Methionyl-tRNA formyltransferase (311 aa).

Residue 112-115 coordinates (6S)-5,6,7,8-tetrahydrofolate; it reads SLLP.

The protein belongs to the Fmt family.

The enzyme catalyses L-methionyl-tRNA(fMet) + (6R)-10-formyltetrahydrofolate = N-formyl-L-methionyl-tRNA(fMet) + (6S)-5,6,7,8-tetrahydrofolate + H(+). Its function is as follows. Attaches a formyl group to the free amino group of methionyl-tRNA(fMet). The formyl group appears to play a dual role in the initiator identity of N-formylmethionyl-tRNA by promoting its recognition by IF2 and preventing the misappropriation of this tRNA by the elongation apparatus. In Bradyrhizobium diazoefficiens (strain JCM 10833 / BCRC 13528 / IAM 13628 / NBRC 14792 / USDA 110), this protein is Methionyl-tRNA formyltransferase.